We begin with the raw amino-acid sequence, 648 residues long: Macrolide export ATP-binding/permease protein MacB (648 aa).

The region spanning 6–251 is the ABC transporter domain; that stretch reads IRVRGVSRAF…GPSAGWRGAI (246 aa). An ATP-binding site is contributed by 42–49; that stretch reads GASGSGKS. A run of 4 helical transmembrane segments spans residues 273–293, 528–548, 572–592, and 613–633; these read LLTMLGIIIGIASVAAISALG, VAVISLIVGGIGVMNIMLVSV, FLIEAVMVCLVGGLMGIMLAL, and SIIVAFACSTLIGIVFGFLPA.

It belongs to the ABC transporter superfamily. Macrolide exporter (TC 3.A.1.122) family. In terms of assembly, homodimer.

It localises to the cell inner membrane. In terms of biological role, non-canonical ABC transporter that contains transmembrane domains (TMD), which form a pore in the inner membrane, and an ATP-binding domain (NBD), which is responsible for energy generation. Confers resistance against macrolides. In Agrobacterium fabrum (strain C58 / ATCC 33970) (Agrobacterium tumefaciens (strain C58)), this protein is Macrolide export ATP-binding/permease protein MacB.